The primary structure comprises 180 residues: UPF0398 protein EF_1150 (180 aa).

Belongs to the UPF0398 family.

The protein is UPF0398 protein EF_1150 of Enterococcus faecalis (strain ATCC 700802 / V583).